The primary structure comprises 519 residues: Ribonuclease Y 1 (519 aa).

Residues 3–23 traverse the membrane as a helical segment; the sequence is VPIVILAIIAIVVGVVGGYYL. Positions 92–120 are enriched in basic and acidic residues; the sequence is QREETLDRKDNSLEKRENSLNRRDKKLSA. A disordered region spans residues 92 to 124; that stretch reads QREETLDRKDNSLEKRENSLNRRDKKLSAEEQN. One can recognise a KH domain in the interval 209–272; that stretch reads TITVVTLPND…EVAKIALEKL (64 aa). The region spanning 335–428 is the HD domain; the sequence is ALAHSIEVAK…VSTADIISAT (94 aa).

The protein belongs to the RNase Y family.

The protein localises to the cell membrane. In terms of biological role, endoribonuclease that initiates mRNA decay. The protein is Ribonuclease Y 1 of Levilactobacillus brevis (strain ATCC 367 / BCRC 12310 / CIP 105137 / JCM 1170 / LMG 11437 / NCIMB 947 / NCTC 947) (Lactobacillus brevis).